The following is an 85-amino-acid chain: Beta-defensin 18 (85 aa).

The first 23 residues, 1–23 (MQSAMKLFFIFLIFVFSVSCGPS), serve as a signal peptide directing secretion. 3 disulfides stabilise this stretch: Cys-39/Cys-65, Cys-46/Cys-60, and Cys-50/Cys-66.

Belongs to the beta-defensin family.

It is found in the secreted. Its function is as follows. Has antibacterial activity. This Rattus norvegicus (Rat) protein is Beta-defensin 18 (Defb18).